The chain runs to 908 residues: Protein translocase subunit SecA (908 aa).

Residues glutamine 90, 108-112 (GEGKT), and aspartate 503 each bind ATP. Residues 846 to 864 (AAAAEAPVAPAPQPAAAAP) are compositionally biased toward low complexity. The interval 846 to 884 (AAAAEAPVAPAPQPAAAAPQPTPELVGAEAGEPDPAAWG) is disordered. Positions 892, 894, 903, and 904 each coordinate Zn(2+).

The protein belongs to the SecA family. In terms of assembly, monomer and homodimer. Part of the essential Sec protein translocation apparatus which comprises SecA, SecYEG and auxiliary proteins SecDF-YajC and YidC. The cofactor is Zn(2+).

It localises to the cell inner membrane. Its subcellular location is the cytoplasm. It carries out the reaction ATP + H2O + cellular proteinSide 1 = ADP + phosphate + cellular proteinSide 2.. Functionally, part of the Sec protein translocase complex. Interacts with the SecYEG preprotein conducting channel. Has a central role in coupling the hydrolysis of ATP to the transfer of proteins into and across the cell membrane, serving both as a receptor for the preprotein-SecB complex and as an ATP-driven molecular motor driving the stepwise translocation of polypeptide chains across the membrane. This Cereibacter sphaeroides (strain ATCC 17029 / ATH 2.4.9) (Rhodobacter sphaeroides) protein is Protein translocase subunit SecA.